The following is a 120-amino-acid chain: Aspartate 1-decarboxylase (120 aa).

Ser25 (schiff-base intermediate with substrate; via pyruvic acid) is an active-site residue. The residue at position 25 (Ser25) is a Pyruvic acid (Ser). Thr57 lines the substrate pocket. Tyr58 acts as the Proton donor in catalysis. Position 73–75 (73–75 (GAA)) interacts with substrate.

The protein belongs to the PanD family. As to quaternary structure, heterooctamer of four alpha and four beta subunits. Requires pyruvate as cofactor. Post-translationally, is synthesized initially as an inactive proenzyme, which is activated by self-cleavage at a specific serine bond to produce a beta-subunit with a hydroxyl group at its C-terminus and an alpha-subunit with a pyruvoyl group at its N-terminus.

The protein localises to the cytoplasm. It carries out the reaction L-aspartate + H(+) = beta-alanine + CO2. It functions in the pathway cofactor biosynthesis; (R)-pantothenate biosynthesis; beta-alanine from L-aspartate: step 1/1. Functionally, catalyzes the pyruvoyl-dependent decarboxylation of aspartate to produce beta-alanine. This Ralstonia pickettii (strain 12J) protein is Aspartate 1-decarboxylase.